The primary structure comprises 472 residues: FAD-dependent monooxygenase dpmaE (472 aa).

A signal peptide spans 1–24; the sequence is MSQRQFKVIIIGGSVTGLTLAHSL. FAD-binding residues include Glu35, Gly49, and Arg108. 2 N-linked (GlcNAc...) asparagine glycosylation sites follow: Asn128 and Asn179. FAD is bound by residues Asp305 and Ala318. The N-linked (GlcNAc...) asparagine glycan is linked to Asn369. The helical transmembrane segment at 440–460 threads the bilayer; it reads LLPLMFTLPLLYFGLSWIVGI.

The protein belongs to the paxM FAD-dependent monooxygenase family. It depends on FAD as a cofactor.

It is found in the membrane. It participates in secondary metabolite biosynthesis; terpenoid biosynthesis. FAD-dependent monooxygenase; part of the gene cluster that mediates the biosynthesis of the diterpenoid pyrones subglutinols A and B. The first step of the pathway is the synthesis of the alpha-pyrone moiety by the polyketide synthase dpmaA via condensation of one acetyl-CoA starter unit with 3 malonyl-CoA units and 2 methylations. The alpha-pyrone is then combined with geranylgeranyl pyrophosphate (GGPP) formed by the GGPP synthase dpmaD through the action of the prenyltransferase dpmaC to yield a linear alpha-pyrone diterpenoid. Subsequent steps in the diterpenoid pyrone biosynthetic pathway involve the decalin core formation, which is initiated by the epoxidation of the C10-C11 olefin by the FAD-dependent oxidoreductase dpmaE, and is followed by a cyclization cascade catalyzed by the terpene cyclase dpmaB. The dehydrogenase dpmaF is then involved in tetrahydrofuran (THF) ring formation at the C5 unit to complete the formation of subglutinols A and B. This chain is FAD-dependent monooxygenase dpmaE, found in Metarhizium anisopliae (Entomophthora anisopliae).